Reading from the N-terminus, the 337-residue chain is Dihydroorotate dehydrogenase (quinone) (337 aa).

FMN is bound by residues 62–66 (AGLDK) and threonine 86. Lysine 66 serves as a coordination point for substrate. 111-115 (NRFGF) serves as a coordination point for substrate. FMN is bound by residues asparagine 139 and asparagine 172. A substrate-binding site is contributed by asparagine 172. Serine 175 functions as the Nucleophile in the catalytic mechanism. Position 177 (asparagine 177) interacts with substrate. Residues lysine 217 and threonine 245 each contribute to the FMN site. 246–247 (NT) contributes to the substrate binding site. FMN contacts are provided by residues glycine 268, glycine 297, and 318–319 (YS).

The protein belongs to the dihydroorotate dehydrogenase family. Type 2 subfamily. In terms of assembly, monomer. The cofactor is FMN.

The protein resides in the cell membrane. It catalyses the reaction (S)-dihydroorotate + a quinone = orotate + a quinol. The protein operates within pyrimidine metabolism; UMP biosynthesis via de novo pathway; orotate from (S)-dihydroorotate (quinone route): step 1/1. Catalyzes the conversion of dihydroorotate to orotate with quinone as electron acceptor. The sequence is that of Dihydroorotate dehydrogenase (quinone) from Methylobacillus flagellatus (strain ATCC 51484 / DSM 6875 / VKM B-1610 / KT).